The sequence spans 217 residues: Probable transaldolase (217 aa).

The active-site Schiff-base intermediate with substrate is Lys83.

It belongs to the transaldolase family. Type 3B subfamily.

The protein resides in the cytoplasm. It catalyses the reaction D-sedoheptulose 7-phosphate + D-glyceraldehyde 3-phosphate = D-erythrose 4-phosphate + beta-D-fructose 6-phosphate. Its pathway is carbohydrate degradation; pentose phosphate pathway; D-glyceraldehyde 3-phosphate and beta-D-fructose 6-phosphate from D-ribose 5-phosphate and D-xylulose 5-phosphate (non-oxidative stage): step 2/3. In terms of biological role, transaldolase is important for the balance of metabolites in the pentose-phosphate pathway. In Coprothermobacter proteolyticus (strain ATCC 35245 / DSM 5265 / OCM 4 / BT), this protein is Probable transaldolase.